The chain runs to 298 residues: MVEIANAHNDLIHDAVLDYYGKKLATCSSDKTIKIFEVEGESHKLVDTLVGHEGPVWRVDWAHPKFGTILASCSYDGKVIIWKEENDRWSQIAVHAVHTASVNSVQWAPHEYGALLLAASSDGKVSVVEFKENGTATPLIFDAHAIGVNAASWAPATVEGGNNPGEAPKEVRRFVTGGADNLVKIWRYNPETQSYLVEDTLEGHSDWVRDVAWSPSVLLRSYIASVSQDRTCNIWTQEDNTGPWVKTQLTPEEFPDVLWRASWSLSGNILAISGGDNKVTLWKENLNGKWESAGEVNQ.

6 WD repeats span residues 7–46 (AHNDLIHDAVLDYYGKKLATCSSDKTIKIFEVEGESHKLV), 51–92 (GHEG…WSQI), 97–138 (VHTA…TATP), 143–196 (AHAI…QSYL), 203–245 (GHSD…GPWV), and 253–292 (EFPDVLWRASWSLSGNILAISGGDNKVTLWKENLNGKWES).

It belongs to the WD repeat SEC13 family. The COPII coat is composed of at least 5 proteins: the SEC23/24 complex, the SEC13/31 complex, and the protein SAR1. Component of the nuclear pore complex (NPC). NPC constitutes the exclusive means of nucleocytoplasmic transport. NPCs allow the passive diffusion of ions and small molecules and the active, nuclear transport receptor-mediated bidirectional transport of macromolecules such as proteins, RNAs, ribonucleoparticles (RNPs), and ribosomal subunits across the nuclear envelope. Due to its 8-fold rotational symmetry, all subunits are present with 8 copies or multiples thereof.

It localises to the cytoplasmic vesicle. The protein resides in the COPII-coated vesicle membrane. The protein localises to the endoplasmic reticulum membrane. It is found in the nucleus. Its subcellular location is the nuclear pore complex. Its function is as follows. Component of the coat protein complex II (COPII) which promotes the formation of transport vesicles from the endoplasmic reticulum (ER). The coat has two main functions, the physical deformation of the endoplasmic reticulum membrane into vesicles and the selection of cargo molecules. It also functions as a component of the nuclear pore complex (NPC). NPC components, collectively referred to as nucleoporins (NUPs), can play the role of both NPC structural components and of docking or interaction partners for transiently associated nuclear transport factors. SEC13 is required for efficient mRNA export from the nucleus to the cytoplasm and for correct nuclear pore biogenesis and distribution. The protein is Protein transport protein SEC13-1 (SEC131) of Candida glabrata (strain ATCC 2001 / BCRC 20586 / JCM 3761 / NBRC 0622 / NRRL Y-65 / CBS 138) (Yeast).